The following is a 1678-amino-acid chain: Serine/threonine-protein kinase pakD (1678 aa).

Over residues 1 to 15 (MSRLQPQQQQRGRSS) the composition is skewed to low complexity. Disordered regions lie at residues 1–73 (MSRL…NNKF), 180–224 (NSNS…PNKN), 262–428 (QLSS…NNNN), and 442–489 (KRKS…SQSS). Polar residues predominate over residues 17–34 (FKDNFQIQKPLQSLTPSE). Low complexity-rich tracts occupy residues 35–73 (QQQQ…NNKF) and 180–214 (NSNS…NNNN). A Calponin-homology (CH) domain is found at 82–189 (KNVENDIKKW…NSNSSKTTTN (108 aa)). Positions 215-224 (RAIITSPNKN) are enriched in polar residues. Composition is skewed to low complexity over residues 276–359 (NNNN…NINN) and 399–428 (NNNN…NNNN). The segment covering 460 to 472 (DSSDSSDSSDSDS) has biased composition (acidic residues). 2 coiled-coil regions span residues 512–542 (KQDK…KKLL) and 570–628 (TRQI…YANT). 3 stretches are compositionally biased toward low complexity: residues 631-654 (SSNS…INGS), 662-671 (NSSTSKGTLS), and 695-713 (NSHQ…QTTS). 2 disordered regions span residues 631-672 (SSNS…TLSR) and 693-722 (PVNS…ASYN). Positions 752 to 862 (VSATLQQKQQ…QNQQINNLID (111 aa)) form a coiled coil. The segment at 1141 to 1197 (PHSFVLKSFRIISECNYCRQYIWGVRGIVAREAFECVGCKYKTHKKCLKEASEKTFC) adopts a Phorbol-ester/DAG-type zinc-finger fold. A CRIB domain is found at 1202–1215 (VGAPFNVKHEMHVG). Disordered regions lie at residues 1267–1292 (LTNN…QQNQ) and 1323–1346 (NNTY…PNNN). The stretch at 1269-1309 (NNSNNNNNNNNSNNNLQQQQQQNQQLKQKLNITNNQQNNTI) forms a coiled coil. In terms of domain architecture, Protein kinase spans 1376 to 1647 (YKVREVVGGG…AHYLLRHPFL (272 aa)). ATP contacts are provided by residues 1382 to 1390 (VGGGSTGKV) and lysine 1405. Aspartate 1515 functions as the Proton acceptor in the catalytic mechanism.

Belongs to the protein kinase superfamily. STE Ser/Thr protein kinase family. STE20 subfamily. Mg(2+) serves as cofactor.

The enzyme catalyses L-seryl-[protein] + ATP = O-phospho-L-seryl-[protein] + ADP + H(+). The catalysed reaction is L-threonyl-[protein] + ATP = O-phospho-L-threonyl-[protein] + ADP + H(+). This chain is Serine/threonine-protein kinase pakD, found in Dictyostelium discoideum (Social amoeba).